The chain runs to 413 residues: Tryptophan synthase beta chain (413 aa).

At lysine 106 the chain carries N6-(pyridoxal phosphate)lysine.

It belongs to the TrpB family. In terms of assembly, tetramer of two alpha and two beta chains. It depends on pyridoxal 5'-phosphate as a cofactor.

It carries out the reaction (1S,2R)-1-C-(indol-3-yl)glycerol 3-phosphate + L-serine = D-glyceraldehyde 3-phosphate + L-tryptophan + H2O. It functions in the pathway amino-acid biosynthesis; L-tryptophan biosynthesis; L-tryptophan from chorismate: step 5/5. Functionally, the beta subunit is responsible for the synthesis of L-tryptophan from indole and L-serine. This is Tryptophan synthase beta chain from Methylorubrum populi (strain ATCC BAA-705 / NCIMB 13946 / BJ001) (Methylobacterium populi).